A 403-amino-acid chain; its full sequence is Alpha-1-antiproteinase F (403 aa).

Residues serine 1–alanine 22 form the signal peptide. Asparagine 55, asparagine 92, asparagine 155, asparagine 222, and asparagine 256 each carry an N-linked (GlcNAc...) asparagine glycan. The interval glycine 358–lysine 377 is RCL.

It belongs to the serpin family.

The protein localises to the secreted. Inhibits elastase, chymotrypsin, cathepsin G, plasmin, and trypsin. This is Alpha-1-antiproteinase F from Cavia porcellus (Guinea pig).